A 1345-amino-acid chain; its full sequence is CRISPR-associated endonuclease Cas9 (1345 aa).

Aspartate 10 functions as the For RuvC-like nuclease domain in the catalytic mechanism. The Mg(2+) site is built by aspartate 10, glutamate 762, and glutamate 766. One can recognise an HNH Cas9-type domain in the interval 770-921 (TNQGRRNSQQ…DKAGFIKRQL (152 aa)). Histidine 840 (proton acceptor for HNH nuclease domain) is an active-site residue. Residue histidine 983 participates in Mg(2+) binding.

The protein belongs to the CRISPR-associated protein Cas9 family. Subtype II-A subfamily. Monomer. Binds crRNA and tracrRNA. Mg(2+) is required as a cofactor.

CRISPR (clustered regularly interspaced short palindromic repeat) is an adaptive immune system that provides protection against mobile genetic elements (viruses, transposable elements and conjugative plasmids). CRISPR clusters contain spacers, sequences complementary to antecedent mobile elements, and target invading nucleic acids. CRISPR clusters are transcribed and processed into CRISPR RNA (crRNA). In type II CRISPR systems correct processing of pre-crRNA requires a trans-encoded small RNA (tracrRNA), endogenous ribonuclease 3 (rnc) and this protein. The tracrRNA serves as a guide for ribonuclease 3-aided processing of pre-crRNA. Subsequently Cas9/crRNA/tracrRNA endonucleolytically cleaves linear or circular dsDNA target complementary to the spacer; Cas9 is inactive in the absence of the 2 guide RNAs (gRNA). Cas9 recognizes the protospacer adjacent motif (PAM) in the CRISPR repeat sequences to help distinguish self versus nonself, as targets within the bacterial CRISPR locus do not have PAMs. PAM recognition is also required for catalytic activity. Complements the gRNA coprocessing defect in a cas9 deletion in S.pyogenes strain 370 and cuts target plasmid in Cas9:gRNAs mixing experiments with S.thermophilus CRISPR3 from strain LMD-9. This Streptococcus mutans serotype c (strain ATCC 700610 / UA159) protein is CRISPR-associated endonuclease Cas9.